Reading from the N-terminus, the 304-residue chain is tRNA pseudouridine synthase B (304 aa).

Residue Asp38 is the Nucleophile of the active site.

It belongs to the pseudouridine synthase TruB family. Type 1 subfamily.

It catalyses the reaction uridine(55) in tRNA = pseudouridine(55) in tRNA. Its function is as follows. Responsible for synthesis of pseudouridine from uracil-55 in the psi GC loop of transfer RNAs. The sequence is that of tRNA pseudouridine synthase B from Geobacter sulfurreducens (strain ATCC 51573 / DSM 12127 / PCA).